Reading from the N-terminus, the 159-residue chain is MKIKVVTVGKLKEKYLKDGIAEYSKRISRFAKFEMIELSDEKTPDKASESENQKILEIEGQRILSKIADRDFVIVLAIEGKTFFSEEFSKQLEETSIKGFSTLTFIIGGSLGLSSSVKNRANLSVSFGRLTLPHQLMRLVLVEQIYRAFTIQQGFPYHK.

S-adenosyl-L-methionine-binding positions include Leu76, Gly108, and 127–132 (FGRLTL).

Belongs to the RNA methyltransferase RlmH family. Homodimer.

Its subcellular location is the cytoplasm. The enzyme catalyses pseudouridine(1915) in 23S rRNA + S-adenosyl-L-methionine = N(3)-methylpseudouridine(1915) in 23S rRNA + S-adenosyl-L-homocysteine + H(+). Specifically methylates the pseudouridine at position 1915 (m3Psi1915) in 23S rRNA. The polypeptide is Ribosomal RNA large subunit methyltransferase H (Streptococcus pneumoniae (strain 70585)).